Here is a 392-residue protein sequence, read N- to C-terminus: Glutamate 5-kinase (392 aa).

Residue Lys17 coordinates ATP. Ser57, Asp144, and Asn156 together coordinate substrate. ATP is bound at residue 176–177 (SD). A PUA domain is found at 282 to 359 (AGILSVDAGA…AEIEALLGYA (78 aa)). A disordered region spans residues 373–392 (TEQTGRKAGKSTKKKDEAHA).

Belongs to the glutamate 5-kinase family.

Its subcellular location is the cytoplasm. It catalyses the reaction L-glutamate + ATP = L-glutamyl 5-phosphate + ADP. The protein operates within amino-acid biosynthesis; L-proline biosynthesis; L-glutamate 5-semialdehyde from L-glutamate: step 1/2. Catalyzes the transfer of a phosphate group to glutamate to form L-glutamate 5-phosphate. The sequence is that of Glutamate 5-kinase from Allorhizobium ampelinum (strain ATCC BAA-846 / DSM 112012 / S4) (Agrobacterium vitis (strain S4)).